The sequence spans 205 residues: MIGKLKGILEHVFDDHIIVDVQGVGYVVFISNRLRPSLPALGESLSLFIETHVREEAIRLFGFVAKAEQEWFCLLQNVPGVGAKVALAILGTLSPDELAQAIALNDIAMISRAPGVGKKVSERIVSELKSKALPFNDNALHFTPQPHLEVTHQPTNDALSALVKLGFERDQAARALALAMNALEGETVSSALLIRHSLKLLSPST.

The interval 1-64 (MIGKLKGILE…EEAIRLFGFV (64 aa)) is domain I. Residues 65 to 143 (AKAEQEWFCL…PFNDNALHFT (79 aa)) form a domain II region. The flexible linker stretch occupies residues 144-149 (PQPHLE). Residues 150 to 205 (VTHQPTNDALSALVKLGFERDQAARALALAMNALEGETVSSALLIRHSLKLLSPST) are domain III.

This sequence belongs to the RuvA family. In terms of assembly, homotetramer. Forms an RuvA(8)-RuvB(12)-Holliday junction (HJ) complex. HJ DNA is sandwiched between 2 RuvA tetramers; dsDNA enters through RuvA and exits via RuvB. An RuvB hexamer assembles on each DNA strand where it exits the tetramer. Each RuvB hexamer is contacted by two RuvA subunits (via domain III) on 2 adjacent RuvB subunits; this complex drives branch migration. In the full resolvosome a probable DNA-RuvA(4)-RuvB(12)-RuvC(2) complex forms which resolves the HJ.

The protein localises to the cytoplasm. In terms of biological role, the RuvA-RuvB-RuvC complex processes Holliday junction (HJ) DNA during genetic recombination and DNA repair, while the RuvA-RuvB complex plays an important role in the rescue of blocked DNA replication forks via replication fork reversal (RFR). RuvA specifically binds to HJ cruciform DNA, conferring on it an open structure. The RuvB hexamer acts as an ATP-dependent pump, pulling dsDNA into and through the RuvAB complex. HJ branch migration allows RuvC to scan DNA until it finds its consensus sequence, where it cleaves and resolves the cruciform DNA. This chain is Holliday junction branch migration complex subunit RuvA, found in Bartonella quintana (strain Toulouse) (Rochalimaea quintana).